A 633-amino-acid chain; its full sequence is UvrABC system protein C (633 aa).

Residues 37 to 115 form the GIY-YIG domain; that stretch reads PKPGVYRMFG…IKSLKPRFNI (79 aa). One can recognise a UVR domain in the interval 225-260; sequence NALREDLQTRMAQASEAMDFETAAKLRDRIRAIAAV.

This sequence belongs to the UvrC family. Interacts with UvrB in an incision complex.

Its subcellular location is the cytoplasm. Functionally, the UvrABC repair system catalyzes the recognition and processing of DNA lesions. UvrC both incises the 5' and 3' sides of the lesion. The N-terminal half is responsible for the 3' incision and the C-terminal half is responsible for the 5' incision. This is UvrABC system protein C from Maricaulis maris (strain MCS10) (Caulobacter maris).